Here is a 615-residue protein sequence, read N- to C-terminus: Crinkler effector protein 15 (615 aa).

Positions 1-17 (MVKLVCAIVGVAGSAFP) are cleaved as a signal peptide. Positions 18-54 (VDIDASQLVGDLKKAIKAENAMTFTGDAKDLQLFLAK) are LQLFLAK domain. The segment at 55 to 136 (QPVDDESGKE…NMELPSSEQI (82 aa)) is DWL domain. The HVLVXXP motif motif lies at 137–143 (HVLVVVP). N531 carries N-linked (GlcNAc...) asparagine glycosylation.

Belongs to the Crinkler effector family.

It is found in the secreted. The protein resides in the host nucleus. In terms of biological role, secreted effector that elicits necrosis in host plants, a characteristic of plant innate immunity. The chain is Crinkler effector protein 15 from Phytophthora infestans (Potato late blight agent).